We begin with the raw amino-acid sequence, 321 residues long: MLNNEYKNSSLKIFSLKGNEPLAQEVADRVGIELGKCSVKRFSDGEIQINIEESIRGCDVFIIQPTSNPVNLHLMELLIMIDACKRASAANINIVVPYYGYARQDRKARSREPITAKLVANLIETAGANRMIALDLHAPQIQGFFDIPIDHLMGVPIIGQHFENDPNIDPEECVVVSPDHGGVTRARKLADILKTPIAIIDKRRPKPNVAEVMNIVGEIEGRTAIIIDDIIDTAGTITLAAQALKDKGAKDVYACCTHPVLSGPAKERIENSAIKELIVTNSILLDDTRKPSNTKELSVAGLLAQAIIRVYERESVSVLFD.

ATP is bound by residues 44–46 (DGE) and 103–104 (RQ). Histidine 137 and aspartate 179 together coordinate Mg(2+). Lysine 202 is a catalytic residue. Residues arginine 204, aspartate 228, and 232–236 (DTAGT) each bind D-ribose 5-phosphate.

It belongs to the ribose-phosphate pyrophosphokinase family. Class I subfamily. Homohexamer. The cofactor is Mg(2+).

The protein localises to the cytoplasm. The enzyme catalyses D-ribose 5-phosphate + ATP = 5-phospho-alpha-D-ribose 1-diphosphate + AMP + H(+). Its pathway is metabolic intermediate biosynthesis; 5-phospho-alpha-D-ribose 1-diphosphate biosynthesis; 5-phospho-alpha-D-ribose 1-diphosphate from D-ribose 5-phosphate (route I): step 1/1. Involved in the biosynthesis of the central metabolite phospho-alpha-D-ribosyl-1-pyrophosphate (PRPP) via the transfer of pyrophosphoryl group from ATP to 1-hydroxyl of ribose-5-phosphate (Rib-5-P). The sequence is that of Ribose-phosphate pyrophosphokinase from Staphylococcus haemolyticus (strain JCSC1435).